A 230-amino-acid polypeptide reads, in one-letter code: Protein FAM3A (230 aa).

A signal peptide spans 1–33 (MRLAGPLRIVVLVVSVGVTWIVVSILLGGPGSG). 2 disulfide bridges follow: C59/C87 and C65/C222. Residues 68–226 (EHLAFRVVSG…LEMEGCIPRR (159 aa)) enclose the GG-type lectin domain.

The protein belongs to the FAM3 family. As to expression, in similar amounts in testis, pancreas, adrenal, placenta, brain, fetal brain, liver, kidney, skeletal muscle and heart.

The protein localises to the secreted. Its function is as follows. May act as a defensin against invading fungal microorganisms. The polypeptide is Protein FAM3A (FAM3A) (Homo sapiens (Human)).